The following is a 640-amino-acid chain: Putative solute carrier organic anion transporter family member 1B7 (640 aa).

Residues Met-1–Ser-16 are Extracellular-facing. Residues Ser-17 to Val-37 traverse the membrane as a helical segment. Topologically, residues Ser-38–Leu-49 are cytoplasmic. The chain crosses the membrane as a helical span at residues Ile-50–Phe-70. Over Met-71 to Met-123 the chain is Extracellular. Residues Trp-124–Leu-144 form a helical membrane-spanning segment. Topologically, residues Gly-145–Ser-159 are cytoplasmic. The helical transmembrane segment at Leu-160–Gly-180 threads the bilayer. Residues Ser-181–Trp-211 are Extracellular-facing. The helical transmembrane segment at Trp-212 to Leu-232 threads the bilayer. At Pro-233–Val-292 the chain is on the cytoplasmic side. Position 246 is a phosphoserine (Ser-246). The chain crosses the membrane as a helical span at residues Ile-293–Ile-313. The Extracellular portion of the chain corresponds to Lys-314–Phe-329. A helical transmembrane segment spans residues Leu-330–Ile-350. The Cytoplasmic portion of the chain corresponds to Lys-351 to Lys-362. Residues Leu-363–Cys-383 form a helical membrane-spanning segment. Residues Glu-384–Val-492 are Extracellular-facing. The region spanning Asp-406–Glu-461 is the Kazal-like domain. 3 disulfides stabilise this stretch: Cys-412-Cys-442, Cys-418-Cys-438, and Cys-427-Cys-459. A helical transmembrane segment spans residues Ile-493–Ile-513. The Cytoplasmic portion of the chain corresponds to Arg-514–Lys-521. Residues Ala-522–Ile-542 form a helical membrane-spanning segment. Topologically, residues Tyr-543–Ala-577 are extracellular. Residues Phe-578–Phe-598 traverse the membrane as a helical segment. Over Val-599–Gln-640 the chain is Cytoplasmic. Ser-636 carries the phosphoserine modification.

It belongs to the organo anion transporter (TC 2.A.60) family.

The protein localises to the cell membrane. This Homo sapiens (Human) protein is Putative solute carrier organic anion transporter family member 1B7 (SLCO1B7).